Here is a 296-residue protein sequence, read N- to C-terminus: Triplex capsid protein 2 (296 aa).

It belongs to the herpesviridae TRX2 protein family. Interacts with TRX1 and major capisd protein/MCP.

The protein resides in the virion. Its subcellular location is the host nucleus. Structural component of the T=16 icosahedral capsid. The capsid is composed of pentamers and hexamers of major capsid protein/MCP, which are linked together by heterotrimers called triplexes. These triplexes are formed by a single molecule of triplex protein 1/TRX1 and two copies of triplex protein 2/TRX2. Additionally, TRX1 is required for efficient transport of TRX2 to the nucleus, which is the site of capsid assembly. The protein is Triplex capsid protein 2 of Homo sapiens (Human).